The following is a 365-amino-acid chain: Histidinol-phosphate aminotransferase (365 aa).

N6-(pyridoxal phosphate)lysine is present on Lys-223.

This sequence belongs to the class-II pyridoxal-phosphate-dependent aminotransferase family. Histidinol-phosphate aminotransferase subfamily. Homodimer. Pyridoxal 5'-phosphate serves as cofactor.

The enzyme catalyses L-histidinol phosphate + 2-oxoglutarate = 3-(imidazol-4-yl)-2-oxopropyl phosphate + L-glutamate. The protein operates within amino-acid biosynthesis; L-histidine biosynthesis; L-histidine from 5-phospho-alpha-D-ribose 1-diphosphate: step 7/9. The polypeptide is Histidinol-phosphate aminotransferase (Brucella melitensis biotype 1 (strain ATCC 23456 / CCUG 17765 / NCTC 10094 / 16M)).